Here is a 256-residue protein sequence, read N- to C-terminus: tRNA (guanine-N(7)-)-methyltransferase (256 aa).

The span at 1 to 11 (MHPQDASTEQT) shows a compositional bias: polar residues. Residues 1–35 (MHPQDASTEQTPVDDDQVESSQPVHAPEDVAHPRR) are disordered. S-adenosyl-L-methionine-binding residues include glutamate 85, glutamate 110, aspartate 137, and aspartate 160. Residue aspartate 160 is part of the active site. Substrate is bound at residue lysine 164. Positions 166–171 (RHNKRR) are interaction with RNA. Substrate-binding positions include aspartate 196 and 234–237 (TKFE).

The protein belongs to the class I-like SAM-binding methyltransferase superfamily. TrmB family.

The catalysed reaction is guanosine(46) in tRNA + S-adenosyl-L-methionine = N(7)-methylguanosine(46) in tRNA + S-adenosyl-L-homocysteine. The protein operates within tRNA modification; N(7)-methylguanine-tRNA biosynthesis. Catalyzes the formation of N(7)-methylguanine at position 46 (m7G46) in tRNA. The protein is tRNA (guanine-N(7)-)-methyltransferase of Cupriavidus pinatubonensis (strain JMP 134 / LMG 1197) (Cupriavidus necator (strain JMP 134)).